The primary structure comprises 384 residues: Probable endopolygalacturonase C (384 aa).

The signal sequence occupies residues 1–19; that stretch reads MVRQLILISSLLAAVAVRA. A propeptide spanning residues 20-40 is cleaved from the precursor; sequence APADPAHPMVTEAPDVNLVEK. The cysteines at positions 45 and 63 are disulfide-linked. 2 PbH1 repeats span residues 176–207 and 208–229; these read STDLTMTDITVDNTDGDTDDLAANTDGFDIGE and STYITITGAEIYNQDDCVAINS. The Proton donor role is filled by aspartate 222. Cysteine 224 and cysteine 240 are oxidised to a cystine. Histidine 244 is an active-site residue. 2 PbH1 repeats span residues 254–280 and 288–310; these read RDDNTVKNVTFYDVNVLKSQQAIRIKT and VSEVTYHEIAFSDATDYGIVIEQ. Residue asparagine 261 is glycosylated (N-linked (GlcNAc...) asparagine). 2 cysteine pairs are disulfide-bonded: cysteine 349-cysteine 354 and cysteine 373-cysteine 382.

This sequence belongs to the glycosyl hydrolase 28 family.

Its subcellular location is the secreted. The enzyme catalyses (1,4-alpha-D-galacturonosyl)n+m + H2O = (1,4-alpha-D-galacturonosyl)n + (1,4-alpha-D-galacturonosyl)m.. Functionally, involved in maceration and soft-rotting of plant tissue. Hydrolyzes the 1,4-alpha glycosidic bonds of de-esterified pectate in the smooth region of the plant cell wall. This Aspergillus niger (strain ATCC MYA-4892 / CBS 513.88 / FGSC A1513) protein is Probable endopolygalacturonase C (pgaC).